The chain runs to 1477 residues: Oligomycin resistance ATP-dependent permease YOR1 (1477 aa).

Residues Met1 to Lys48 are disordered. Residues Met1 to Gln206 lie on the Cytoplasmic side of the membrane. 2 positions are modified to phosphoserine: Ser10 and Ser24. Over residues Asp36–Lys48 the composition is skewed to basic and acidic residues. Position 53 is a phosphothreonine (Thr53). Residues Asp71 to Glu73 carry the Diacidic ER export motif DxE motif. Residues Tyr207 to Ile227 form a helical membrane-spanning segment. Residues Tyr207–Asp493 enclose the ABC transmembrane type-1 1 domain. Residues Thr228–Gly249 are Extracellular-facing. Residues Ile250–Phe270 traverse the membrane as a helical segment. At Phe271 to Pro328 the chain is on the cytoplasmic side. A helical transmembrane segment spans residues Phe329–Gly349. The Extracellular portion of the chain corresponds to Pro350–Gly357. A helical membrane pass occupies residues Ile358–Phe370. Over Lys371–Asn433 the chain is Cytoplasmic. Residues Phe434–Met454 form a helical membrane-spanning segment. The Extracellular segment spans residues Tyr455–Ser478. The chain crosses the membrane as a helical span at residues Leu479 to Gly499. Residues Arg500 to Glu615 lie on the Cytoplasmic side of the membrane. Positions Lys552 to Asp595 are disordered. The segment covering Lys581–Asp595 has biased composition (basic and acidic residues). An ABC transporter 1 domain is found at Lys581–Phe808. A helical membrane pass occupies residues Phe616–Gly636. Gly621 to Ser628 lines the ATP pocket. The Extracellular portion of the chain corresponds to Ser637–Trp892. Residues Asn661, Asn759, and Asn799 are each glycosylated (N-linked (GlcNAc...) asparagine). A helical membrane pass occupies residues Gly893–Phe913. One can recognise an ABC transmembrane type-1 2 domain in the interval Leu897–Asn1175. At Ser914–Phe940 the chain is on the cytoplasmic side. A helical membrane pass occupies residues Phe941–Ile961. Over Met962–Cys1027 the chain is Extracellular. The chain crosses the membrane as a helical span at residues Ile1028 to Ile1048. Over Ala1049 to Trp1117 the chain is Cytoplasmic. A helical membrane pass occupies residues Val1118–Val1138. Topologically, residues Thr1139 to Ala1141 are extracellular. The chain crosses the membrane as a helical span at residues Phe1142–Leu1162. The Cytoplasmic portion of the chain corresponds to Leu1163–Ser1477. One can recognise an ABC transporter 2 domain in the interval Ile1213 to Ser1464. An ATP-binding site is contributed by Gly1247 to Ser1254.

This sequence belongs to the ABC transporter superfamily. ABCC family. Conjugate transporter (TC 3.A.1.208) subfamily.

Its subcellular location is the cell membrane. It catalyses the reaction a 1,2-diacyl-sn-glycero-3-phosphoethanolamine(in) + ATP + H2O = a 1,2-diacyl-sn-glycero-3-phosphoethanolamine(out) + ADP + phosphate + H(+). It carries out the reaction Cd(2+)(in) + ATP + H2O = Cd(2+)(out) + ADP + phosphate + H(+). The enzyme catalyses an S-substituted glutathione(in) + ATP + H2O = an S-substituted glutathione(out) + ADP + phosphate + H(+). Functionally, functions as a pleiotropic drug pump at the plasma membrane to clear toxic substances from the cytosol. Organic anion transporter involved in the detoxification of a wide range of toxic environmental organic anions that contain carboxyl groups. Required for tolerance to reveromycin A, tautomycin and leptomycin B. Required for oligomycin resistance. Required for rhodamine B resistance. Mediates the ATP-dependent efflux of rhodamine B. Involved in cadmium detoxification. Displays an energy-dependent efflux of cadmium and glutathione, suggesting that YOR1 transports both compounds as a bis-glutathionato-cadmium Cd-(GS)(2) complex. Confers resistance to rhodamine 6G and to doxorubicin. The chain is Oligomycin resistance ATP-dependent permease YOR1 from Saccharomyces cerevisiae (strain ATCC 204508 / S288c) (Baker's yeast).